Here is a 142-residue protein sequence, read N- to C-terminus: Large ribosomal subunit protein uL13 (142 aa).

Belongs to the universal ribosomal protein uL13 family. Part of the 50S ribosomal subunit.

In terms of biological role, this protein is one of the early assembly proteins of the 50S ribosomal subunit, although it is not seen to bind rRNA by itself. It is important during the early stages of 50S assembly. The chain is Large ribosomal subunit protein uL13 from Histophilus somni (strain 2336) (Haemophilus somnus).